A 767-amino-acid chain; its full sequence is Photosystem I P700 chlorophyll a apoprotein A1 (767 aa).

A disordered region spans residues 1 to 22 (MTISPPESGEKNKKVLEDPVKA). A compositionally biased stretch (basic and acidic residues) spans 8 to 22 (SGEKNKKVLEDPVKA). Transmembrane regions (helical) follow at residues 76 to 99 (IFSA…FHGA), 162 to 185 (LMAL…YHYH), 201 to 225 (LNHH…HIGA), 309 to 327 (IAHH…GHLY), 368 to 391 (RHAQ…HHMY), 407 to 433 (LGLF…IAMV), 455 to 477 (ALIS…LYIH), and 558 to 576 (LMIH…LILL). Residues C600 and C609 each coordinate [4Fe-4S] cluster. Helical transmembrane passes span 616–637 (HVFL…HFSW) and 681–703 (ISMY…MFLF). Position 692 (H692) interacts with divinylchlorophyll a'. Residues M700 and Y708 each coordinate divinyl chlorophyll a. W709 contributes to the phylloquinone binding site. The chain crosses the membrane as a helical span at residues 741–761 (AVGVAHFLLGGIATTWAFFHA).

Belongs to the PsaA/PsaB family. The PsaA/B heterodimer binds the P700 divinyl chlorophyll special pair and subsequent electron acceptors. PSI consists of a core antenna complex that captures photons, and an electron transfer chain that converts photonic excitation into a charge separation. The cyanobacterial PSI reaction center is composed of one copy each of PsaA,B,C,D,E,F,I,J,K,L,M and X, and forms trimeric complexes. Requires PSI electron transfer chain: 5 divinyl chlorophyll a, 1 divinyl chlorophyll a', 2 phylloquinones and 3 4Fe-4S clusters. PSI core antenna: 90 divinyl chlorophyll a, 22 carotenoids, 3 phospholipids and 1 galactolipid. P700 is a divinyl chlorophyll a/divinyl chlorophyll a' dimer, A0 is one or more divinyl chlorophyll a, A1 is one or both phylloquinones and FX is a shared 4Fe-4S iron-sulfur center. as cofactor.

It localises to the cellular thylakoid membrane. The catalysed reaction is reduced [plastocyanin] + hnu + oxidized [2Fe-2S]-[ferredoxin] = oxidized [plastocyanin] + reduced [2Fe-2S]-[ferredoxin]. Functionally, psaA and PsaB bind P700, the primary electron donor of photosystem I (PSI), as well as the electron acceptors A0, A1 and FX. PSI is a plastocyanin/cytochrome c6-ferredoxin oxidoreductase, converting photonic excitation into a charge separation, which transfers an electron from the donor P700 chlorophyll pair to the spectroscopically characterized acceptors A0, A1, FX, FA and FB in turn. Oxidized P700 is reduced on the lumenal side of the thylakoid membrane by plastocyanin or cytochrome c6. The protein is Photosystem I P700 chlorophyll a apoprotein A1 of Prochlorococcus marinus (strain MIT 9312).